We begin with the raw amino-acid sequence, 244 residues long: MNIDLNADLGEGCASDSELLTLVSSANIACGFHAGDAQTMLTCVREALKNGVAIGAHPSFPDRDNLGRTAMVLPPETVYAQTLYQIGALGAIVQAQGGVMRHVKPHGMLYNQAAKDPRLAQAIAKAVHDYDPSLILVGLAGSELIRAGERHRLVTRQEVFADRGYQADGSLVPRTQPGALIHDEEQALAQTLDMVQAGRVKSVTGVWTTVTAQTVCIHGDGEYALAFARRLRAAFNARNIHVIA.

The protein belongs to the LamB/PxpA family. Forms a complex composed of PxpA, PxpB and PxpC.

The enzyme catalyses 5-oxo-L-proline + ATP + 2 H2O = L-glutamate + ADP + phosphate + H(+). Functionally, catalyzes the cleavage of 5-oxoproline to form L-glutamate coupled to the hydrolysis of ATP to ADP and inorganic phosphate. The sequence is that of 5-oxoprolinase subunit A from Salmonella heidelberg (strain SL476).